The following is a 350-amino-acid chain: Induced myeloid leukemia cell differentiation protein Mcl-1 homolog (350 aa).

A Glycyl lysine isopeptide (Lys-Gly) (interchain with G-Cter in ubiquitin) cross-link involves residue Lys-5. Residues 23-95 form a disordered region; the sequence is AGSGGASSSG…GPNVSATPPR (73 aa). The segment covering 31–41 has biased composition (low complexity); the sequence is SGGRLLASGRE. The span at 50 to 61 shows a compositional bias: gly residues; it reads GGEAGAVIGGSA. Residues 104 to 175 are PEST-like; that stretch reads RASPPEEMEG…PAEEEEDELY (72 aa). Ser-121 is subject to Phosphoserine. A Glycyl lysine isopeptide (Lys-Gly) (interchain with G-Cter in ubiquitin) cross-link involves residue Lys-136. The segment at 150–169 is disordered; the sequence is ASSGPGMDGSLPSTPPPAEE. Phosphoserine; by GSK3-alpha and GSK3-beta is present on Ser-159. Residue Ser-162 is modified to Phosphoserine. Thr-163 is subject to Phosphothreonine. Residues Lys-194 and Lys-197 each participate in a glycyl lysine isopeptide (Lys-Gly) (interchain with G-Cter in ubiquitin) cross-link. The BH3 signature appears at 209–223; it reads ALETLQRVGDGVQRN. The short motif at 252 to 272 is the BH1 element; it reads HVFSDGVTNWGRIVTLISFGA. The BH2 signature appears at 304-319; the sequence is DWLVKQRGWDGFVEFF. The helical transmembrane segment at 327-349 threads the bilayer; it reads GIRNVLLAFAGVAGVGAGLAYLI.

It belongs to the Bcl-2 family. As to quaternary structure, interacts with HIF3A (via C-terminus domain). Interacts with BOK, BIK, BAX, BAK1, and TPT1. Interacts with unphosphorylated BAD. Interacts with BMF, BBC3 and PMAIP1. Interacts with BOP. Interacts with BCL2L11; may sequester BCL2L11 to prevent its pro-apoptotic activity. Interacts with GIMAP5 and HSPA8/HSC70; the interaction between HSPA8 and MCL1 is impaired in the absence of GIMAP5. Post-translationally, cleaved by CASP3 during apoptosis, yielding a pro-apoptotic C-terminal fragment. Rapidly degraded in the absence of phosphorylation in the PEST region. In terms of processing, phosphorylated on Ser-159, by GSK3, in response to IL3/interleukin-3 withdrawal. Phosphorylation at Ser-159 induces ubiquitination and proteasomal degradation, abrogating the anti-apoptotic activity. Treatment with taxol or okadaic acid induces phosphorylation on additional sites. Post-translationally, ubiquitinated. Ubiquitination is induced by phosphorylation at Ser-159. Deubiquitinated by USP20; leading to increased stability. Detected in peripheral blood mononuclear cells and bone marrow.

The protein resides in the membrane. The protein localises to the cytoplasm. Its subcellular location is the mitochondrion. It localises to the nucleus. It is found in the nucleoplasm. In terms of biological role, involved in the regulation of apoptosis versus cell survival, and in the maintenance of viability but not of proliferation. Mediates its effects by interactions with a number of other regulators of apoptosis. The chain is Induced myeloid leukemia cell differentiation protein Mcl-1 homolog (MCL1) from Canis lupus familiaris (Dog).